Consider the following 81-residue polypeptide: Sec-independent protein translocase protein TatA (81 aa).

The chain crosses the membrane as a helical span at residues 1 to 21 (MGGISVWQLLIIAVIVVLLFG). Positions 42-81 (AMSDEDSAKNEKDADFEPKSLEKQQQKEAAPETKKDKEQA) are disordered.

It belongs to the TatA/E family. The Tat system comprises two distinct complexes: a TatABC complex, containing multiple copies of TatA, TatB and TatC subunits, and a separate TatA complex, containing only TatA subunits. Substrates initially bind to the TatABC complex, which probably triggers association of the separate TatA complex to form the active translocon.

Its subcellular location is the cell inner membrane. Its function is as follows. Part of the twin-arginine translocation (Tat) system that transports large folded proteins containing a characteristic twin-arginine motif in their signal peptide across membranes. TatA could form the protein-conducting channel of the Tat system. The polypeptide is Sec-independent protein translocase protein TatA (Vibrio parahaemolyticus serotype O3:K6 (strain RIMD 2210633)).